The chain runs to 184 residues: Tumor necrosis factor alpha-induced protein 8-like protein 2 (184 aa).

Phosphoserine; by MAP3K7 is present on serine 3.

The protein belongs to the TNFAIP8 family. TNFAIP8L2 subfamily. In terms of assembly, may interact with CASP8; however, such result is unclear since PubMed:19079267 could not reproduce the interaction with CASP8. Interacts with RAC1. Post-translationally, phosphorylated by TAK1/MAP3K7; this phosphorylation triggers association with BTRC and subsequent ubiquitination and degradation. In terms of processing, ubiquitinated in a BTRC-depdent manner; leading to degradation mediated through the proteasome pathway. As to expression, expressed in T-cells, B-cells, macrophages, neurons in the brain and brainstem, and stratified squamous epithelia of the esophagus, cervix and skin.

It is found in the cytoplasm. The protein localises to the nucleus. Its subcellular location is the lysosome. In terms of biological role, acts as a negative regulator of innate and adaptive immunity by maintaining immune homeostasis. Plays a regulatory role in the Toll-like signaling pathway by determining the strength of LPS-induced signaling and gene expression. Inhibits TCR-mediated T-cell activation and negatively regulate T-cell function to prevent hyperresponsiveness. Also inhibits autolysosome formation via negatively modulating MTOR activation by interacting with RAC1 and promoting the disassociation of the RAC1-MTOR complex. Plays an essential role in NK-cell biology by acting as a checkpoint and displaying an expression pattern correlating with NK-cell maturation process and by negatively regulating NK-cell maturation and antitumor immunity. Mechanistically, suppresses IL-15-triggered mTOR activity in NK-cells. This Homo sapiens (Human) protein is Tumor necrosis factor alpha-induced protein 8-like protein 2 (TNFAIP8L2).